The chain runs to 241 residues: Ubiquinone biosynthesis O-methyltransferase (241 aa).

Residues arginine 44, glycine 64, aspartate 85, and methionine 129 each coordinate S-adenosyl-L-methionine.

Belongs to the methyltransferase superfamily. UbiG/COQ3 family.

The catalysed reaction is a 3-demethylubiquinol + S-adenosyl-L-methionine = a ubiquinol + S-adenosyl-L-homocysteine + H(+). The enzyme catalyses a 3-(all-trans-polyprenyl)benzene-1,2-diol + S-adenosyl-L-methionine = a 2-methoxy-6-(all-trans-polyprenyl)phenol + S-adenosyl-L-homocysteine + H(+). It participates in cofactor biosynthesis; ubiquinone biosynthesis. In terms of biological role, O-methyltransferase that catalyzes the 2 O-methylation steps in the ubiquinone biosynthetic pathway. This chain is Ubiquinone biosynthesis O-methyltransferase, found in Serratia proteamaculans (strain 568).